A 273-amino-acid chain; its full sequence is 3-methyl-2-oxobutanoate hydroxymethyltransferase (273 aa).

Positions 53 and 92 each coordinate Mg(2+). Residues 53 to 54 (DS), Asp92, and Lys120 contribute to the 3-methyl-2-oxobutanoate site. Glu122 provides a ligand contact to Mg(2+). Glu189 functions as the Proton acceptor in the catalytic mechanism.

The protein belongs to the PanB family. Homodecamer; pentamer of dimers. Mg(2+) is required as a cofactor.

It localises to the cytoplasm. The catalysed reaction is 3-methyl-2-oxobutanoate + (6R)-5,10-methylene-5,6,7,8-tetrahydrofolate + H2O = 2-dehydropantoate + (6S)-5,6,7,8-tetrahydrofolate. The protein operates within cofactor biosynthesis; (R)-pantothenate biosynthesis; (R)-pantoate from 3-methyl-2-oxobutanoate: step 1/2. Its function is as follows. Catalyzes the reversible reaction in which hydroxymethyl group from 5,10-methylenetetrahydrofolate is transferred onto alpha-ketoisovalerate to form ketopantoate. This is 3-methyl-2-oxobutanoate hydroxymethyltransferase from Cupriavidus pinatubonensis (strain JMP 134 / LMG 1197) (Cupriavidus necator (strain JMP 134)).